Here is a 317-residue protein sequence, read N- to C-terminus: Pantothenate kinase (317 aa).

99-106 (GSVSVGKS) provides a ligand contact to ATP.

The protein belongs to the prokaryotic pantothenate kinase family.

It is found in the cytoplasm. It carries out the reaction (R)-pantothenate + ATP = (R)-4'-phosphopantothenate + ADP + H(+). The protein operates within cofactor biosynthesis; coenzyme A biosynthesis; CoA from (R)-pantothenate: step 1/5. This Histophilus somni (strain 129Pt) (Haemophilus somnus) protein is Pantothenate kinase.